Consider the following 102-residue polypeptide: Small ribosomal subunit protein uS10 (102 aa).

It belongs to the universal ribosomal protein uS10 family. Part of the 30S ribosomal subunit.

Involved in the binding of tRNA to the ribosomes. The chain is Small ribosomal subunit protein uS10 from Methanoregula boonei (strain DSM 21154 / JCM 14090 / 6A8).